A 271-amino-acid polypeptide reads, in one-letter code: Formamidopyrimidine-DNA glycosylase (271 aa).

The Schiff-base intermediate with DNA role is filled by P2. The Proton donor role is filled by E3. K57 acts as the Proton donor; for beta-elimination activity in catalysis. Residues H90, R109, and K150 each coordinate DNA. The FPG-type zinc finger occupies 235–269 (LVYGNKDKPCPKCGGKIESLIIGQRNSFFCPKCQK). R259 acts as the Proton donor; for delta-elimination activity in catalysis.

This sequence belongs to the FPG family. As to quaternary structure, monomer. It depends on Zn(2+) as a cofactor.

It catalyses the reaction Hydrolysis of DNA containing ring-opened 7-methylguanine residues, releasing 2,6-diamino-4-hydroxy-5-(N-methyl)formamidopyrimidine.. It carries out the reaction 2'-deoxyribonucleotide-(2'-deoxyribose 5'-phosphate)-2'-deoxyribonucleotide-DNA = a 3'-end 2'-deoxyribonucleotide-(2,3-dehydro-2,3-deoxyribose 5'-phosphate)-DNA + a 5'-end 5'-phospho-2'-deoxyribonucleoside-DNA + H(+). Functionally, involved in base excision repair of DNA damaged by oxidation or by mutagenic agents. Acts as a DNA glycosylase that recognizes and removes damaged bases. Has a preference for oxidized purines, such as 7,8-dihydro-8-oxoguanine (8-oxoG). Has AP (apurinic/apyrimidinic) lyase activity and introduces nicks in the DNA strand. Cleaves the DNA backbone by beta-delta elimination to generate a single-strand break at the site of the removed base with both 3'- and 5'-phosphates. This Haemophilus influenzae (strain PittEE) protein is Formamidopyrimidine-DNA glycosylase.